The chain runs to 95 residues: Small ribosomal subunit protein uS19 (95 aa).

Belongs to the universal ribosomal protein uS19 family.

Functionally, protein S19 forms a complex with S13 that binds strongly to the 16S ribosomal RNA. This Clostridium kluyveri (strain NBRC 12016) protein is Small ribosomal subunit protein uS19.